We begin with the raw amino-acid sequence, 511 residues long: 2-isopropylmalate synthase (511 aa).

Residues 5–267 (LFIFDTTLRD…DTRIDATQIV (263 aa)) form the Pyruvate carboxyltransferase domain. The Mn(2+) site is built by aspartate 14, histidine 202, histidine 204, and asparagine 238. A regulatory domain region spans residues 393 to 511 (KLLSMKVCSE…SKRERAHPQV (119 aa)).

The protein belongs to the alpha-IPM synthase/homocitrate synthase family. LeuA type 1 subfamily. As to quaternary structure, homodimer. It depends on Mn(2+) as a cofactor.

It localises to the cytoplasm. It carries out the reaction 3-methyl-2-oxobutanoate + acetyl-CoA + H2O = (2S)-2-isopropylmalate + CoA + H(+). It participates in amino-acid biosynthesis; L-leucine biosynthesis; L-leucine from 3-methyl-2-oxobutanoate: step 1/4. Its function is as follows. Catalyzes the condensation of the acetyl group of acetyl-CoA with 3-methyl-2-oxobutanoate (2-ketoisovalerate) to form 3-carboxy-3-hydroxy-4-methylpentanoate (2-isopropylmalate). This is 2-isopropylmalate synthase from Thiobacillus denitrificans (strain ATCC 25259 / T1).